The sequence spans 474 residues: MIKLTIAIATCLVLCLVLLLPSSNISYRHKYDLPTNGLNDSEQQSEKLLGGLLATGFEEKSCLSRYDQSMSKPSPYKPSRHIVSKLRSYEMLHKRCGPGTKAYKRATKQLGHNELSSSGDECRYVVWMPMFGLGNRMLSLVSVFLYALLTDRVMLVDQRNDITDLFCEPFPETSWLLPLDFPLNDQLDSFNREHSRCYGTMLKNHGINSTSIIPSHLYLDIFHDSRDHDKKFFCEEDQAFLDKVTWLVVKSNLYFVPSLWMIPSFQTKLIKLFPQKETVFHHLARYLFHPTNQVWGMVTRSYNAYLSRADERLGIQVRVFSKPVGYFQHVMDQILYSDHLKNMFLEQASSTGETIEVYQPSGEKIQQTDKKLHDQKALAEIYLLSLTDELVTSTRSTFGYVAQGLGGLKPWILYEPRDKKTPNPPCVRAMSMEPCFLRAPLHGCQAKTIKIPPFVRICEDWKTGLKLVDVSDEL.

A helical; Signal-anchor for type II membrane protein membrane pass occupies residues 1-21; it reads MIKLTIAIATCLVLCLVLLLP. The Lumenal segment spans residues 22–474; sequence SSNISYRHKY…LKLVDVSDEL (453 aa). N24, N39, and N208 each carry an N-linked (GlcNAc...) asparagine glycan.

It belongs to the glycosyltransferase 37 family. Expressed in leaves and stems.

It localises to the golgi apparatus. Its subcellular location is the golgi stack membrane. It functions in the pathway protein modification; protein glycosylation. Functionally, may be involved in cell wall biosynthesis. May act as a fucosyltransferase. The chain is Probable fucosyltransferase 9 (FUT9) from Arabidopsis thaliana (Mouse-ear cress).